A 125-amino-acid chain; its full sequence is MNKQVRNTTEIVRLAKLKSQKTREKVDKAISKFCIEGFAINFNSIAKERNVSKSWLYKEHDIRQRIESLRERQITSNVVSKPKKSSRSEEILIKTLKRRVMELEKENKKLQNQIQKLYGDLYNKE.

In Staphylococcus aureus, this protein is Transposase C from transposon PsiTn554 (tnpC).